Consider the following 45-residue polypeptide: MTKRTFGGTSRKRKRVSGFRVRMRTHTGRRVIRSRRKRGRTRLAV.

The segment at 1-24 is disordered; it reads MTKRTFGGTSRKRKRVSGFRVRMR. Basic residues predominate over residues 10–24; the sequence is SRKRKRVSGFRVRMR.

It belongs to the bacterial ribosomal protein bL34 family.

This is Large ribosomal subunit protein bL34 from Prochlorococcus marinus (strain MIT 9303).